We begin with the raw amino-acid sequence, 465 residues long: Cysteine--tRNA ligase (465 aa).

Cysteine 30 lines the Zn(2+) pocket. The short motif at 32-42 (PTVYDRAHLGN) is the 'HIGH' region element. Cysteine 213, histidine 238, and glutamate 242 together coordinate Zn(2+). A 'KMSKS' region motif is present at residues 271–275 (KMSKS). Lysine 274 serves as a coordination point for ATP.

This sequence belongs to the class-I aminoacyl-tRNA synthetase family. As to quaternary structure, monomer. The cofactor is Zn(2+).

It is found in the cytoplasm. The catalysed reaction is tRNA(Cys) + L-cysteine + ATP = L-cysteinyl-tRNA(Cys) + AMP + diphosphate. The chain is Cysteine--tRNA ligase from Ruegeria pomeroyi (strain ATCC 700808 / DSM 15171 / DSS-3) (Silicibacter pomeroyi).